The primary structure comprises 149 residues: Protein cornichon homolog 2 (149 aa).

A run of 3 helical transmembrane segments spans residues 3-23, 59-79, and 117-137; these read IELILWLFSFASIMVLIGLTA, ALCASFLLTLHWFPFLVMAPV, and YFSLFIITIYRLVMTAVTLFI.

Belongs to the cornichon family.

Its subcellular location is the endoplasmic reticulum membrane. The protein resides in the golgi apparatus membrane. Its function is as follows. Acts as a cargo receptor necessary for the transportation of secretory proteins from the endoplasmic reticulum (ER) in COPII-coated vesicles targeted to the Golgi apparatus. In Oryza sativa subsp. japonica (Rice), this protein is Protein cornichon homolog 2.